We begin with the raw amino-acid sequence, 221 residues long: Deoxyribose-phosphate aldolase 1 (221 aa).

Aspartate 89 serves as the catalytic Proton donor/acceptor. Lysine 152 (schiff-base intermediate with acetaldehyde) is an active-site residue. Lysine 181 serves as the catalytic Proton donor/acceptor.

This sequence belongs to the DeoC/FbaB aldolase family. DeoC type 1 subfamily.

The protein resides in the cytoplasm. It carries out the reaction 2-deoxy-D-ribose 5-phosphate = D-glyceraldehyde 3-phosphate + acetaldehyde. It functions in the pathway carbohydrate degradation; 2-deoxy-D-ribose 1-phosphate degradation; D-glyceraldehyde 3-phosphate and acetaldehyde from 2-deoxy-alpha-D-ribose 1-phosphate: step 2/2. Catalyzes a reversible aldol reaction between acetaldehyde and D-glyceraldehyde 3-phosphate to generate 2-deoxy-D-ribose 5-phosphate. In Oceanobacillus iheyensis (strain DSM 14371 / CIP 107618 / JCM 11309 / KCTC 3954 / HTE831), this protein is Deoxyribose-phosphate aldolase 1.